Here is a 143-residue protein sequence, read N- to C-terminus: Transcriptional regulator MraZ (143 aa).

SpoVT-AbrB domains follow at residues 5 to 47 (EYHH…SMEE) and 76 to 119 (AMES…AKER).

Belongs to the MraZ family. In terms of assembly, forms oligomers.

It is found in the cytoplasm. The protein resides in the nucleoid. The polypeptide is Transcriptional regulator MraZ (Lactobacillus helveticus (strain DPC 4571)).